We begin with the raw amino-acid sequence, 276 residues long: Rhamnulose-1-phosphate aldolase (276 aa).

The active site involves E117. Zn(2+) is bound by residues H141, H143, and H212.

Belongs to the aldolase class II family. RhaD subfamily. In terms of assembly, homotetramer. The cofactor is Zn(2+).

The protein resides in the cytoplasm. It catalyses the reaction L-rhamnulose 1-phosphate = (S)-lactaldehyde + dihydroxyacetone phosphate. It participates in carbohydrate degradation; L-rhamnose degradation; glycerone phosphate from L-rhamnose: step 3/3. Catalyzes the reversible cleavage of L-rhamnulose-1-phosphate to dihydroxyacetone phosphate (DHAP) and L-lactaldehyde. This is Rhamnulose-1-phosphate aldolase from Klebsiella pneumoniae (strain 342).